We begin with the raw amino-acid sequence, 558 residues long: TNF receptor-associated factor 5 (558 aa).

An RING-type zinc finger spans residues 45–85 (CAFCHSVLHNPHQTGCGHRFCQQCIRSLRELNSVPICPVDK). 2 TRAF-type zinc fingers span residues 127–181 (DHLQ…TNLQ) and 182–239 (DHEE…GNLL). The stretch at 252-302 (LVLEKNYQLEQRISDLYQSLEQKESKIQQLAETVKKFEKELKQFTQMFGRN) forms a coiled coil. A Glycyl lysine isopeptide (Lys-Gly) (interchain with G-Cter in ubiquitin) cross-link involves residue Lys-318. Residues 340-400 (LDLRSLVDAV…EERFKQLEGA (61 aa)) are a coiled coil. The interaction with EIF2AK2/PKR stretch occupies residues 345–558 (LVDAVDSVKQ…AVDLTDLEDL (214 aa)). Residues 403–550 (SGKLIWKVTD…DDTLFLKVAV (148 aa)) enclose the MATH domain.

It belongs to the TNF receptor-associated factor family. A subfamily. Homotrimer. Heterotrimer with TRAF3. Associates with TNFRSF5/CD40 through interaction with TRAF3. Associates with LTBR/TNFRSF3, TNFRSF4, TNFRSF8/CD30, TNFRSF11A/RANK, TNFRSF13B/TACI, TNFRSF14, TNFRSF17, TNFRSF19/TROY, RIPK2, MAP3K14, MAP3K5, and TRAF and TNF receptor associated protein TDP2. Interacts (via C-terminus) with EIF2AK2/PKR (via the kinase catalytic domain). In terms of processing, ubiquitinated at Lys-318 by the SCF(FBXL2) complex, leading to its degradation by the proteasome.

It localises to the cytoplasm. The protein localises to the cytosol. In terms of biological role, adapter protein and signal transducer that links members of the tumor necrosis factor receptor family to different signaling pathways by association with the receptor cytoplasmic domain and kinases. Mediates activation of NF-kappa-B and probably JNK. Seems to be involved in apoptosis. Plays a role in mediating activation of NF-kappa-B by EIF2AK2/PKR. This chain is TNF receptor-associated factor 5 (Traf5), found in Mus musculus (Mouse).